The primary structure comprises 138 residues: Small ribosomal subunit protein uS11c (138 aa).

The disordered stretch occupies residues methionine 1–arginine 23. Residues glycine 9–arginine 23 show a composition bias toward basic residues.

The protein belongs to the universal ribosomal protein uS11 family. In terms of assembly, part of the 30S ribosomal subunit.

It localises to the plastid. It is found in the chloroplast. The protein is Small ribosomal subunit protein uS11c of Cucumis sativus (Cucumber).